The chain runs to 593 residues: Probable translation initiation factor IF-2 (593 aa).

The tr-type G domain maps to 7 to 221 (IRTPIVCVMG…VLIGLAQRYM (215 aa)). A G1 region spans residues 16 to 23 (GHVDHGKT). 16–23 (GHVDHGKT) lines the GTP pocket. The interval 41-45 (EITQH) is G2. The tract at residues 77-80 (DTPG) is G3. GTP is bound by residues 77-81 (DTPGH) and 131-134 (NKVD). The interval 131-134 (NKVD) is G4. The segment at 199–201 (SAL) is G5.

This sequence belongs to the TRAFAC class translation factor GTPase superfamily. Classic translation factor GTPase family. IF-2 subfamily.

Function in general translation initiation by promoting the binding of the formylmethionine-tRNA to ribosomes. Seems to function along with eIF-2. This Methanoculleus marisnigri (strain ATCC 35101 / DSM 1498 / JR1) protein is Probable translation initiation factor IF-2.